Consider the following 475-residue polypeptide: Fez family zinc finger protein 1 (475 aa).

The short motif at 28-43 is the Engrailed homology 1 repressor element; sequence PLAFSIERIMARTPEP. C2H2-type zinc fingers lie at residues 260–282, 288–310, 316–338, 344–366, 372–394, and 400–423; these read FTCE…MPVH, FVCK…KIIH, HKCN…TRIH, FVCE…KLTH, FKCN…MHTH, and FTCP…RKLH. Residues 425 to 475 form a disordered region; that stretch reads SSLGLTRTPTGEPSSDPPPQLQQPPPAPLPPLQPTLPPPGPLPSGLHQGHQ. Polar residues predominate over residues 427–437; it reads LGLTRTPTGEP. The segment covering 439 to 466 has biased composition (pro residues); sequence SDPPPQLQQPPPAPLPPLQPTLPPPGPL.

It belongs to the krueppel C2H2-type zinc-finger protein family.

It localises to the nucleus. Functionally, transcription repressor. Involved in the axonal projection and proper termination of olfactory sensory neurons (OSN). Plays a role in rostro-caudal patterning of the diencephalon and in prethalamic formation. Expression is required in OSN to cell-autonomously regulate OSN axon projections. Regulates non-cell-autonomously the layer formation of the olfactory bulb development and the interneurons. May be required for correct rostral migration of the interneuron progenitors. In Mus musculus (Mouse), this protein is Fez family zinc finger protein 1 (Fezf1).